Consider the following 124-residue polypeptide: Immunoglobulin lambda variable 5-52 (124 aa).

The first 19 residues, 1 to 19 (MAWTLLLLVLLSHCTGSLS), serve as a signal peptide directing secretion. Residues 20–44 (QPVLTQPSSHSASSGASVRLTCMLS) are framework-1. The region spanning 21 to 124 (PVLTQPSSHS…CGTWHSNSKT (104 aa)) is the Ig-like domain. An intrachain disulfide couples Cys-41 to Cys-115. A complementarity-determining-1 region spans residues 45-53 (SGFSVGDFW). Residues 54-70 (IRWYQQKPGNPPRYLLY) are framework-2. A complementarity-determining-2 region spans residues 71–77 (YHSDSNK). A framework-3 region spans residues 78–115 (GQGSGVPSRFSGSNDASANAGILRISGLQPEDEADYYC). Residues 116–124 (GTWHSNSKT) are complementarity-determining-3.

As to quaternary structure, immunoglobulins are composed of two identical heavy chains and two identical light chains; disulfide-linked.

The protein localises to the secreted. It is found in the cell membrane. Functionally, v region of the variable domain of immunoglobulin light chains that participates in the antigen recognition. Immunoglobulins, also known as antibodies, are membrane-bound or secreted glycoproteins produced by B lymphocytes. In the recognition phase of humoral immunity, the membrane-bound immunoglobulins serve as receptors which, upon binding of a specific antigen, trigger the clonal expansion and differentiation of B lymphocytes into immunoglobulins-secreting plasma cells. Secreted immunoglobulins mediate the effector phase of humoral immunity, which results in the elimination of bound antigens. The antigen binding site is formed by the variable domain of one heavy chain, together with that of its associated light chain. Thus, each immunoglobulin has two antigen binding sites with remarkable affinity for a particular antigen. The variable domains are assembled by a process called V-(D)-J rearrangement and can then be subjected to somatic hypermutations which, after exposure to antigen and selection, allow affinity maturation for a particular antigen. This Homo sapiens (Human) protein is Immunoglobulin lambda variable 5-52.